We begin with the raw amino-acid sequence, 435 residues long: 3-ketoacyl-CoA thiolase (435 aa).

Cys98 serves as the catalytic Acyl-thioester intermediate. Residues His391 and Cys421 each act as proton acceptor in the active site.

It belongs to the thiolase-like superfamily. Thiolase family. Heterotetramer of two alpha chains (FadJ) and two beta chains (FadI).

It is found in the cytoplasm. The catalysed reaction is an acyl-CoA + acetyl-CoA = a 3-oxoacyl-CoA + CoA. The protein operates within lipid metabolism; fatty acid beta-oxidation. Functionally, catalyzes the final step of fatty acid oxidation in which acetyl-CoA is released and the CoA ester of a fatty acid two carbons shorter is formed. This chain is 3-ketoacyl-CoA thiolase, found in Vibrio vulnificus (strain CMCP6).